Consider the following 307-residue polypeptide: Follistatin-related protein 1 (307 aa).

Residues 1-19 (MMWRRWLALALVAVAWVHA) form the signal peptide. The Follistatin-like domain maps to 29-52 (ICANVFCGAGRECAVTEKGEPTCL). 5 disulfides stabilise this stretch: cysteine 30/cysteine 41, cysteine 35/cysteine 51, cysteine 53/cysteine 83, cysteine 57/cysteine 76, and cysteine 65/cysteine 97. A Kazal-like domain is found at 47 to 99 (GEPTCLCIEQCKPHKRPVCGSNGKTYLNHCELHRDACLTGSKIQVDYDGHCKE). The N-linked (GlcNAc...) asparagine glycan is linked to asparagine 143. Positions 143-177 (NYSEILDKYFKNFDNGDSRLDSSEFLKFVEQNETA) constitute an EF-hand 1 domain. Position 164 is a phosphoserine (serine 164). Asparagine 174 and asparagine 179 each carry an N-linked (GlcNAc...) asparagine glycan. An EF-hand 2 domain is found at 192–227 (LRGLCVDALIELSDENADWKLSFQEFLKCLNPSFNP). Positions 232–286 (CALEDETYADGAETEVDCNRCVCACGNWVCTAMTCDGKNQKGAQTQAEEEMTRYV) constitute a VWFC domain.

In terms of assembly, homodimer. Interacts with SCN10A. Interacts with DIP2A; DIP2A may act as a cell surface receptor for FSTL1. Interacts with BMP4. Interacts with CD14; this interaction promotes TL4-mediated signaling cascade.

The protein resides in the secreted. Secreted glycoprotein that is involved in various physiological processes, such as angiogenesis, regulation of the immune response, cell proliferation and differentiation. Plays a role in the development of the central nervous system, skeletal system, lungs, and ureter. Promotes endothelial cell survival, migration and differentiation into network structures in an AKT-dependent manner. Also promotes survival of cardiac myocytes. Initiates various signaling cascades by activating different receptors on the cell surface such as DIP2A, TLR4 or BMP receptors. The polypeptide is Follistatin-related protein 1 (FSTL1) (Bos taurus (Bovine)).